We begin with the raw amino-acid sequence, 641 residues long: Threonine--tRNA ligase (641 aa).

The TGS domain occupies 1–61 (MPAITLPDGS…ADDASVRFIT (61 aa)). The segment at 243–536 (DHRRIGREMD…LIEQHAGRFP (294 aa)) is catalytic. The Zn(2+) site is built by Cys336, His387, and His513.

The protein belongs to the class-II aminoacyl-tRNA synthetase family. As to quaternary structure, homodimer. Requires Zn(2+) as cofactor.

The protein localises to the cytoplasm. It carries out the reaction tRNA(Thr) + L-threonine + ATP = L-threonyl-tRNA(Thr) + AMP + diphosphate + H(+). In terms of biological role, catalyzes the attachment of threonine to tRNA(Thr) in a two-step reaction: L-threonine is first activated by ATP to form Thr-AMP and then transferred to the acceptor end of tRNA(Thr). Also edits incorrectly charged L-seryl-tRNA(Thr). The chain is Threonine--tRNA ligase from Gluconacetobacter diazotrophicus (strain ATCC 49037 / DSM 5601 / CCUG 37298 / CIP 103539 / LMG 7603 / PAl5).